The chain runs to 457 residues: L-asparaginase-like protein GA18140 (457 aa).

Positions 1-20 (MRYLCRAQLLSLLLLPLLKA) are cleaved as a signal peptide. Disulfide bonds link Cys-72–Cys-78, Cys-172–Cys-188, and Cys-327–Cys-354.

Belongs to the Ntn-hydrolase family.

This Drosophila pseudoobscura pseudoobscura (Fruit fly) protein is L-asparaginase-like protein GA18140.